The sequence spans 382 residues: Alanine racemase (382 aa).

Catalysis depends on lysine 39, which acts as the Proton acceptor; specific for D-alanine. At lysine 39 the chain carries N6-(pyridoxal phosphate)lysine. A substrate-binding site is contributed by arginine 138. Tyrosine 265 (proton acceptor; specific for L-alanine) is an active-site residue. Methionine 312 is a binding site for substrate.

The protein belongs to the alanine racemase family. Pyridoxal 5'-phosphate serves as cofactor.

It catalyses the reaction L-alanine = D-alanine. Its pathway is amino-acid biosynthesis; D-alanine biosynthesis; D-alanine from L-alanine: step 1/1. Catalyzes the interconversion of L-alanine and D-alanine. May also act on other amino acids. The sequence is that of Alanine racemase (alr) from Staphylococcus saprophyticus subsp. saprophyticus (strain ATCC 15305 / DSM 20229 / NCIMB 8711 / NCTC 7292 / S-41).